Consider the following 629-residue polypeptide: Serine/threonine-protein kinase ICK (629 aa).

The Protein kinase domain occupies 4-284 (YTTIKQLGDG…ASQALRYPYF (281 aa)). ATP is bound by residues 10-18 (LGDGTYGSV) and Lys-33. Asp-125 acts as the Proton acceptor in catalysis. Thr-157 carries the post-translational modification Phosphothreonine. Position 159 is a phosphotyrosine (Tyr-159). A Phosphoserine modification is found at Ser-161. Disordered regions lie at residues 292-322 (ISTQ…PAQA), 454-482 (PSEP…QSTA), and 579-629 (GYSS…PSRR). Residues 309–321 (GPPPYVKPAPPAQ) are compositionally biased toward pro residues. Over residues 460 to 482 (TGTSVSTQASSQRRDTPTLQSTA) the composition is skewed to polar residues.

This sequence belongs to the protein kinase superfamily. CMGC Ser/Thr protein kinase family. CDC2/CDKX subfamily. Mg(2+) serves as cofactor. Post-translationally, autophosphorylated on serine and threonine residues. Phosphorylation at Thr-157 increases kinase activity. Expressed in embryonic heart from day 11. Highly expressed in the uterus and at lower levels in brain, heart, lung, kidney, skeletal muscle, ovary and liver in adult tissues.

Its subcellular location is the cytoplasm. The protein resides in the cell projection. The protein localises to the cilium. It localises to the nucleus. It is found in the cytoskeleton. Its subcellular location is the cilium basal body. The catalysed reaction is L-seryl-[protein] + ATP = O-phospho-L-seryl-[protein] + ADP + H(+). The enzyme catalyses L-threonyl-[protein] + ATP = O-phospho-L-threonyl-[protein] + ADP + H(+). Required for ciliogenesis, particularly in neuronal and retinal progenitor cells. Phosphorylates KIF3A. Involved in the control of ciliary length. Regulates the ciliary localization of SHH pathway components as well as the localization of IFT components at ciliary tips. May play a role in cardiac development. Regulates intraflagellar transport (IFT) speed and negatively regulates cilium length in a cAMP and mTORC1 signaling-dependent manner and this regulation requires its kinase activity. In Rattus norvegicus (Rat), this protein is Serine/threonine-protein kinase ICK (Cilk1).